A 644-amino-acid chain; its full sequence is Complement component C1q receptor (644 aa).

An N-terminal signal peptide occupies residues 1 to 22 (MAISTGLFLLLGLLGQPWAGAA). Over 23-572 (ADSQAVVCEG…SAHSDTDGQN (550 aa)) the chain is Extracellular. One can recognise a C-type lectin domain in the interval 31 to 173 (EGTACYTAHW…CGTPEAPGNS (143 aa)). The N-linked (GlcNAc...) asparagine glycan is linked to Asn-102. 16 disulfides stabilise this stretch: Cys-140-Cys-164, Cys-261-Cys-272, Cys-268-Cys-282, Cys-284-Cys-297, Cys-303-Cys-314, Cys-308-Cys-325, Cys-327-Cys-340, Cys-346-Cys-355, Cys-351-Cys-364, Cys-366-Cys-380, Cys-386-Cys-397, Cys-393-Cys-406, Cys-408-Cys-422, Cys-428-Cys-440, Cys-436-Cys-449, and Cys-451-Cys-464. EGF-like domains follow at residues 257-298 (PKFG…VTCA) and 299-341 (SRNP…VHCV). Asn-322 carries an N-linked (GlcNAc...) asparagine glycan. An EGF-like 3; calcium-binding domain is found at 342–381 (DIDECQDSPCAQDCVNTLGSFHCECWVGYQPSGPKEEACE). The 42-residue stretch at 382 to 423 (DVDECAAANSPCAQGCINTDGSFYCSCKEGYIVSGEDSTQCE) folds into the EGF-like 4; calcium-binding domain. In terms of domain architecture, EGF-like 5; calcium-binding spans 424–465 (DIDECSDARGNPCDSLCFNTDGSFRCGCPPGWELAPNGVFCS). The disordered stretch occupies residues 473–508 (LPARPPQKEDNDDRKESTMPPTEMPSSPSGSKDVSN). Basic and acidic residues predominate over residues 478-489 (PQKEDNDDRKES). Low complexity predominate over residues 490–501 (TMPPTEMPSSPS). A helical transmembrane segment spans residues 573-593 (LLLFYILGTVVAISLLLVLAL). The Cytoplasmic portion of the chain corresponds to 594–644 (GILIYHKRRAKKEEIKEKKPQNAADSYSWVPERAESQAPENQYSPTPGTDC). Residues 605–644 (KEEIKEKKPQNAADSYSWVPERAESQAPENQYSPTPGTDC) are disordered. Ser-619 is modified (phosphoserine). Tyr-620 and Tyr-636 each carry phosphotyrosine. Over residues 631–644 (APENQYSPTPGTDC) the composition is skewed to polar residues.

As to quaternary structure, homodimer. Interacts with C1QBP; the association may represent a cell surface C1q receptor. Interacts with surfactant protein A/SFTPA1. Interacts with multimerin-2/MMRN2. Interacts with DAG1; this interaction plays an important role in endothelial cell migration. Interacts with CBL. Interacts with IGFBP7. Interacts with VEGFR2. N- and O-glycosylated. Post-translationally, phosphorylated on Tyr-620 and Tyr-636 by SRC; these phosphorylations promote endothelial cell adhesion and migration. Expressed in lung, heart and bone marrow. Expressed at lower level in ovary, whole embryo and fetal liver. Not detected in brain, adult liver or thymus. Highly expressed in peritoneal cavity and bone marrow macrophages. Not detected in epithelial cells.

It is found in the cell membrane. Its function is as follows. Cell surface receptor that plays a role in various physiological processes including inflammation, phagocytosis, and cell adhesion. Plays a role in phagocytosis and enhances the uptake of apoptotic cells and immune complexes by acting as a receptor for defense collagens including surfactant protein A/SFTPA1, C1q, and mannose-binding lectin (MBL2). Plays a role in the regulation of endothelial cell function and adhesion by activating angiogenesis. Mechanistically, exerts its angiogenic function by associating with beta-dystroglycan, leading to SRC-dependent phosphorylation and subsequent recruitment of CBL. In turn, CBL provides a docking site for downstream signaling components, such as CRKL to enhance cell migration. Participates in angiogenesis also by acting as a receptor for the ECM pan-endothelial glycoprotein multimerin-2/MMRN2 and IGFBP7 ligands. Both ligands play a non-redundant role in CD93-mediated endothelial cell function. Acts as a key regulator of endothelial barrier function through modulating VEGFR2 function. This is Complement component C1q receptor (Cd93) from Mus musculus (Mouse).